Reading from the N-terminus, the 113-residue chain is Large ribosomal subunit protein bL19 (113 aa).

This sequence belongs to the bacterial ribosomal protein bL19 family.

In terms of biological role, this protein is located at the 30S-50S ribosomal subunit interface and may play a role in the structure and function of the aminoacyl-tRNA binding site. The polypeptide is Large ribosomal subunit protein bL19 (Mycobacterium avium (strain 104)).